The following is a 311-amino-acid chain: tRNA-cytidine(32) 2-sulfurtransferase (311 aa).

The PP-loop motif signature appears at 47–52 (SGGKDS). The [4Fe-4S] cluster site is built by C122, C125, and C213.

Belongs to the TtcA family. Homodimer. It depends on Mg(2+) as a cofactor. [4Fe-4S] cluster serves as cofactor.

Its subcellular location is the cytoplasm. It catalyses the reaction cytidine(32) in tRNA + S-sulfanyl-L-cysteinyl-[cysteine desulfurase] + AH2 + ATP = 2-thiocytidine(32) in tRNA + L-cysteinyl-[cysteine desulfurase] + A + AMP + diphosphate + H(+). Its pathway is tRNA modification. Its function is as follows. Catalyzes the ATP-dependent 2-thiolation of cytidine in position 32 of tRNA, to form 2-thiocytidine (s(2)C32). The sulfur atoms are provided by the cysteine/cysteine desulfurase (IscS) system. In Salmonella heidelberg (strain SL476), this protein is tRNA-cytidine(32) 2-sulfurtransferase.